A 66-amino-acid polypeptide reads, in one-letter code: Large ribosomal subunit protein bL33c (66 aa).

Belongs to the bacterial ribosomal protein bL33 family.

The protein resides in the plastid. It localises to the chloroplast. The polypeptide is Large ribosomal subunit protein bL33c (Aethionema cordifolium (Lebanon stonecress)).